The following is a 419-amino-acid chain: MSDTSKTNLSEQLFAPRMNTKETSNLVKIANLKSASVHNALDGDSESGWYRVLRRPQWIWQGIDPIEMEAILSRMASSTATRTSDELLDTVIGYKPGNWIYEWTQVGAKLQKKARAYVEAGQKEKAADTLLKASMYYSVAAYPHLKGDTLAAQAEIQANQSYRESMALTPHQIRTIDVKYEGKTFQAFIHLPRTDKLLPTVIVSGGLDSLQSDLWRLYRDYFGPAGFAMVTLDMPSVGHSSRWALTEDTSRLHQALVQQIRDVPWVDNTKVAMLGLRFGANAAIRLGFMEPTRLKTCISLGGAIHSMLTQPTMLDSMPRMYLDVIASRMGKHGVSKSSLTSHLPAWSLKNQGLLGRRKVDVPMLGISLKNDPVCREIDNQLIEKSSRGGKAITLPDTPLHDGYHRSMVTVIEWLKDKLA.

Belongs to the FrsA family.

It catalyses the reaction a carboxylic ester + H2O = an alcohol + a carboxylate + H(+). Catalyzes the hydrolysis of esters. In Photobacterium profundum (strain SS9), this protein is Esterase FrsA.